A 457-amino-acid chain; its full sequence is Protein unc-93 homolog A (457 aa).

The next 5 helical transmembrane spans lie at 8–28, 42–62, 65–85, 86–106, and 140–160; these read VLVVSFGFLLLFTAYGGLQSL, ALSTLYGGMLLSSMFLPPLLI, LGCKGTIILSMCGYVAFSVGN, FFASWYTLIPTSILLGLGAAP, and IFFLIFQSSGVWGNLISSLVF. The N-linked (GlcNAc...) asparagine glycan is linked to asparagine 190. 6 helical membrane passes run 202 to 222, 257 to 277, 291 to 311, 320 to 340, 344 to 364, and 395 to 415; these read TLLGIYTGSGVLAVLMIAAFL, LCLLILLPLYSGLQQGFLSSE, FVGYVMICFSATDALCSVLYG, AVLYVLGAVTHVSCMIALLLW, ADHLAVFFVFSGLWGVADAVW, and FVIAFGYSMFLCVHVKLYILL.

It belongs to the unc-93 family. Expressed in testis, small intestine, spleen, prostate and ovary.

It localises to the cell membrane. In Homo sapiens (Human), this protein is Protein unc-93 homolog A (UNC93A).